The following is a 225-amino-acid chain: 3-dehydroquinate dehydratase (225 aa).

3-dehydroquinate is bound by residues 30-32 (EWR) and arginine 62. Catalysis depends on histidine 118, which acts as the Proton donor/acceptor. Lysine 143 serves as the catalytic Schiff-base intermediate with substrate. The 3-dehydroquinate site is built by arginine 186, serine 205, and glutamine 209.

The protein belongs to the type-I 3-dehydroquinase family. As to quaternary structure, homodimer.

The enzyme catalyses 3-dehydroquinate = 3-dehydroshikimate + H2O. Its pathway is metabolic intermediate biosynthesis; chorismate biosynthesis; chorismate from D-erythrose 4-phosphate and phosphoenolpyruvate: step 3/7. Involved in the third step of the chorismate pathway, which leads to the biosynthesis of aromatic amino acids. Catalyzes the cis-dehydration of 3-dehydroquinate (DHQ) and introduces the first double bond of the aromatic ring to yield 3-dehydroshikimate. The sequence is that of 3-dehydroquinate dehydratase from Streptococcus thermophilus (strain ATCC BAA-250 / LMG 18311).